Here is a 197-residue protein sequence, read N- to C-terminus: Transcription factor FapR (197 aa).

This sequence belongs to the FapR family.

Transcriptional factor involved in regulation of membrane lipid biosynthesis by repressing genes involved in fatty acid and phospholipid metabolism. The chain is Transcription factor FapR from Bacillus anthracis (strain A0248).